A 284-amino-acid polypeptide reads, in one-letter code: 4-diphosphocytidyl-2-C-methyl-D-erythritol kinase (284 aa).

K14 is a catalytic residue. 98 to 108 (PMGGGLGGGSS) contacts ATP. D140 is an active-site residue.

It belongs to the GHMP kinase family. IspE subfamily.

It carries out the reaction 4-CDP-2-C-methyl-D-erythritol + ATP = 4-CDP-2-C-methyl-D-erythritol 2-phosphate + ADP + H(+). The protein operates within isoprenoid biosynthesis; isopentenyl diphosphate biosynthesis via DXP pathway; isopentenyl diphosphate from 1-deoxy-D-xylulose 5-phosphate: step 3/6. Its function is as follows. Catalyzes the phosphorylation of the position 2 hydroxy group of 4-diphosphocytidyl-2C-methyl-D-erythritol. This chain is 4-diphosphocytidyl-2-C-methyl-D-erythritol kinase, found in Shewanella denitrificans (strain OS217 / ATCC BAA-1090 / DSM 15013).